A 169-amino-acid polypeptide reads, in one-letter code: MSEETIRLGRERRYLVLLGIICLALIGGALYMQIVLGEAPCPLCILQRYALLLIALFAFIGAAMRTRRSITVFEVLVVICAIAGAGVAGHHVYTQFYPAVSCGIDVLQPIVDDLPLAKIFPLGFQVDGFCSTPYPPILGLSLAQWALVAFVLVVILVPLLTSRNRKALR.

At 1–14 (MSEETIRLGRERRY) the chain is on the cytoplasmic side. The chain crosses the membrane as a helical span at residues 15 to 31 (LVLLGIICLALIGGALY). At 32–49 (MQIVLGEAPCPLCILQRY) the chain is on the periplasmic side. Cysteine 41 and cysteine 44 are disulfide-bonded. A helical transmembrane segment spans residues 50 to 64 (ALLLIALFAFIGAAM). The Cytoplasmic segment spans residues 65 to 71 (RTRRSIT). Residues 72–89 (VFEVLVVICAIAGAGVAG) form a helical membrane-spanning segment. Residues 90–144 (HHVYTQFYPAVSCGIDVLQPIVDDLPLAKIFPLGFQVDGFCSTPYPPILGLSLAQ) lie on the Periplasmic side of the membrane. Cysteine 102 and cysteine 130 form a disulfide bridge. Residues 145-163 (WALVAFVLVVILVPLLTSR) form a helical membrane-spanning segment. Residues 164–169 (NRKALR) are Cytoplasmic-facing.

It belongs to the DsbB family.

It localises to the cell inner membrane. Its function is as follows. Required for disulfide bond formation in some periplasmic proteins. Acts by oxidizing the DsbA protein. The protein is Disulfide bond formation protein B 1 of Pseudomonas fluorescens (strain Pf0-1).